A 136-amino-acid chain; its full sequence is ATP synthase epsilon chain, chloroplastic (136 aa).

This sequence belongs to the ATPase epsilon chain family. In terms of assembly, F-type ATPases have 2 components, CF(1) - the catalytic core - and CF(0) - the membrane proton channel. CF(1) has five subunits: alpha(3), beta(3), gamma(1), delta(1), epsilon(1). CF(0) has three main subunits: a, b and c.

The protein resides in the plastid. The protein localises to the chloroplast thylakoid membrane. Its function is as follows. Produces ATP from ADP in the presence of a proton gradient across the membrane. This is ATP synthase epsilon chain, chloroplastic from Tetradesmus obliquus (Green alga).